A 246-amino-acid polypeptide reads, in one-letter code: Complement C1q subcomponent subunit C (246 aa).

The N-terminal stretch at 1–29 (MVVGPSCQPPCGLCLLLLFLLALPLRSQA) is a signal peptide. Positions 32–113 (GCYGIPGMPG…GPPGEPGVEG (82 aa)) constitute a Collagen-like domain. 4-hydroxyproline is present on residues Pro37, Pro40, Pro43, Pro46, and Pro64. A disordered region spans residues 44 to 116 (GAPGKDGHDG…GEPGVEGRYK (73 aa)). 5-hydroxylysine is present on Lys76. Lys76 carries O-linked (Gal...) hydroxylysine glycosylation. 4-hydroxyproline is present on residues Pro82, Pro97, Pro100, and Pro106. The span at 99–108 (DPGPRGPPGE) shows a compositional bias: pro residues. Positions 116–246 (KQKHQSVFTV…VFSGFLLFPD (131 aa)) constitute a C1q domain. A disulfide bridge links Cys180 with Cys194.

Core component of the complement C1 complex, a calcium-dependent complex composed of 1 molecule of the C1Q subcomplex, 2 molecules of C1R and 2 molecules of C1S. The C1Q subcomplex is composed 18 subunits: 3 chains of C1QA, C1QB, and C1QC trimerize to form 6 collagen-like triple helices connected to six globular ligand-recognition modules (C1q domain). O-linked glycans consist of Glc-Gal disaccharides bound to the oxygen atom of post-translationally added hydroxyl groups.

The protein localises to the secreted. It is found in the cell surface. Its activity is regulated as follows. The C1Q subcomplex is inhibited by sulfated molecules, such as triterpenoid sulfates, heparan sulfate, or chondroitin sulfates. Functionally, core component of the complement C1 complex, a multiprotein complex that initiates the classical pathway of the complement system, a cascade of proteins that leads to phagocytosis and breakdown of pathogens and signaling that strengthens the adaptive immune system. The classical complement pathway is initiated by the C1Q subcomplex of the C1 complex, which specifically binds IgG or IgM immunoglobulins complexed with antigens, forming antigen-antibody complexes on the surface of pathogens: C1QA, together with C1QB and C1QC, specifically recognizes and binds the Fc regions of IgG or IgM via its C1q domain. Immunoglobulin-binding activates the proenzyme C1R, which cleaves C1S, initiating the proteolytic cascade of the complement system. The C1Q subcomplex is activated by a hexamer of IgG complexed with antigens, while it is activated by a pentameric IgM. The C1Q subcomplex also recognizes and binds phosphatidylserine exposed on the surface of cells undergoing programmed cell death, possibly promoting activation of the complement system. This is Complement C1q subcomponent subunit C from Mus musculus (Mouse).